The primary structure comprises 800 residues: Nuclear cap-binding protein subunit 1 (800 aa).

The segment at 1–26 (MSRRRAHDTEDEGYDHRRNKRRRVSE) is disordered. Thr-9 bears the Phosphothreonine mark. The MIF4G domain occupies 31-243 (EDRLESLILR…CLWAQIRKLR (213 aa)). The tract at residues 669 to 700 (LAKADSSSSDSEDDSSHKRKKPITHADKPSEE) is disordered.

The protein belongs to the NCBP1 family. In terms of assembly, component of the nuclear cap-binding complex (CBC), a heterodimer composed of Cbp80 and Cbp20 that interacts with m7GpppG-capped RNA.

The protein localises to the nucleus. Its function is as follows. Component of the cap-binding complex (CBC), which binds cotranscriptionally to the 5'-cap of pre-mRNAs and is involved in various processes such as pre-mRNA splicing and RNA-mediated gene silencing (RNAi). The CBC complex is involved in miRNA-mediated RNA interference via its interaction with Ars2 and is required for primary microRNAs (miRNAs) processing. Also involved in innate immunity via the short interfering RNAs (siRNAs) processing machinery by restricting the viral RNA production. In the CBC complex, Cbp80 does not bind directly capped RNAs (m7GpppG-capped RNA) but is required to stabilize the movement of the N-terminal loop of Cbp20 and lock the CBC into a high affinity cap-binding state with the cap structure. The sequence is that of Nuclear cap-binding protein subunit 1 (Cbp80) from Drosophila melanogaster (Fruit fly).